Here is a 409-residue protein sequence, read N- to C-terminus: LL-diaminopimelate aminotransferase (409 aa).

Residues tyrosine 15 and glycine 42 each contribute to the substrate site. Pyridoxal 5'-phosphate is bound by residues tyrosine 72, 108-109 (SK), tyrosine 132, asparagine 187, tyrosine 218, and 246-248 (SFS). 3 residues coordinate substrate: lysine 109, tyrosine 132, and asparagine 187. N6-(pyridoxal phosphate)lysine is present on lysine 249. Pyridoxal 5'-phosphate contacts are provided by arginine 257 and asparagine 292. Substrate contacts are provided by asparagine 292 and arginine 388.

It belongs to the class-I pyridoxal-phosphate-dependent aminotransferase family. LL-diaminopimelate aminotransferase subfamily. Homodimer. Pyridoxal 5'-phosphate serves as cofactor.

It carries out the reaction (2S,6S)-2,6-diaminopimelate + 2-oxoglutarate = (S)-2,3,4,5-tetrahydrodipicolinate + L-glutamate + H2O + H(+). It functions in the pathway amino-acid biosynthesis; L-lysine biosynthesis via DAP pathway; LL-2,6-diaminopimelate from (S)-tetrahydrodipicolinate (aminotransferase route): step 1/1. Involved in the synthesis of meso-diaminopimelate (m-DAP or DL-DAP), required for both lysine and peptidoglycan biosynthesis. Catalyzes the direct conversion of tetrahydrodipicolinate to LL-diaminopimelate. The polypeptide is LL-diaminopimelate aminotransferase (Acaryochloris marina (strain MBIC 11017)).